Reading from the N-terminus, the 295-residue chain is Secreted frizzled-related protein 2 (295 aa).

The first 24 residues, 1–24 (MPRGPASLLLLVLASHCCLGSARG), serve as a signal peptide directing secretion. The FZ domain occupies 35–155 (YKRSNCKPIP…PQDNDLCIPL (121 aa)). Disulfide bonds link C40–C103, C50–C96, C87–C125, C114–C152, C118–C142, C172–C245, C175–C247, and C190–C295. An NTR domain is found at 172–295 (CEACKTKNED…ISRSIRKLQC (124 aa)).

The protein belongs to the secreted frizzled-related protein (sFRP) family. As to expression, highly expressed in the eye. Weaker expression in heart and lung.

The protein resides in the secreted. Its function is as follows. Soluble frizzled-related proteins (sFRPS) function as modulators of Wnt signaling through direct interaction with Wnts. They have a role in regulating cell growth and differentiation in specific cell types. SFRP2 may be important for eye retinal development and for myogenesis. This is Secreted frizzled-related protein 2 from Mus musculus (Mouse).